A 1150-amino-acid chain; its full sequence is Solute carrier family 12 member 6 (1150 aa).

Residues 1-108 (MHPPEATTKM…GEHSQLLDDG (108 aa)) are disordered. Residues 1-135 (MHPPEATTKM…DEYFDKNLAL (135 aa)) lie on the Cytoplasmic side of the membrane. Low complexity predominate over residues 28-45 (LSDTSPDLSSRSSSRVRF). Phosphoserine is present on Ser32. A compositionally biased stretch (polar residues) spans 80–101 (DRTSNPQDVTEDPSQNSITGEH). Ser120 is subject to Phosphoserine. The discontinuously helical transmembrane segment at 136-158 (FEEEMDTRPKVSSLLNRMANYTN) threads the bilayer. Positions 147 and 148 each coordinate K(+). Residue Ser148 is modified to Phosphoserine. Position 151 (Asn151) interacts with chloride. The Extracellular portion of the chain corresponds to 159–165 (LTQGAKE). A disordered region spans residues 161–181 (QGAKEHEEAENITEGKKKPTK). The span at 163–177 (AKEHEEAENITEGKK) shows a compositional bias: basic and acidic residues. Residues 166 to 188 (HEEAENITEGKKKPTKSPQMGTF) form a helical membrane-spanning segment. Residues 189-211 (MGVYLPCLQNIFGVILFLRLTWV) lie on the Cytoplasmic side of the membrane. A helical transmembrane segment spans residues 212–245 (VGTAGILQAFAIVLICCCCTMLTAISMSAIATNG). Residues 246-263 (VVPAGGSYFMISRALGPE) lie on the Extracellular side of the membrane. The next 2 membrane-spanning stretches (helical) occupy residues 264-287 (FGGA…ILGA) and 288-316 (IEIF…AMLN). A K(+)-binding site is contributed by Tyr283. Topologically, residues 317-433 (NMRVYGTAFL…FVHNNVISIQ (117 aa)) are extracellular. Residues Cys375 and Cys390 are joined by a disulfide bond. Asn379, Asn398, Asn411, and Asn417 each carry an N-linked (GlcNAc...) asparagine glycan. The cysteines at positions 410 and 420 are disulfide-linked. Residues 434–454 (GIPGLASGIITENLWSNYLPK) traverse the membrane as a helical segment. Ile443, Thr444, and Asn446 together coordinate K(+). Chloride contacts are provided by Ile443 and Thr444. Chloride is bound by residues Leu447 and Trp448. Topologically, residues 455–464 (GEIIEKPSAK) are cytoplasmic. Residues 465-487 (SSDVLGNLNHEYVLADITTSFTL) traverse the membrane as a helical segment. Residues 488–518 (LVGIFFPSVTGIMAGSNRSGDLKDAQKSIPI) are Extracellular-facing. Thr497 contacts K(+). Residues 519-545 (GTILAILTTSFVYLSNVVLFGACIEGV) traverse the membrane as a helical segment. Over 546–568 (VLRDKFGDAVKGNLVVGTLSWPS) the chain is Cytoplasmic. The next 2 membrane-spanning stretches (helical) occupy residues 569–589 (PWVI…QSLT) and 590–612 (GAPR…VFGH). Ile603 lines the chloride pocket. At 613–629 (SKANGEPTWALLLTAAI) the chain is on the cytoplasmic side. Helical transmembrane passes span 630-649 (AELG…LSMF) and 650-665 (FLMC…ALQT). Tyr654 is a chloride binding site. Residues 666 to 1150 (LLRTPNWRPR…GGSEVITIYS (485 aa)) are Cytoplasmic-facing. Positions 682 to 691 (ALSFMGMSIC) are scissor helix. Phosphoserine is present on Ser736. Thr778 carries the phosphothreonine modification. A Phosphoserine modification is found at Ser981. Thr991 bears the Phosphothreonine mark. 3 positions are modified to phosphoserine: Ser1023, Ser1029, and Ser1032. Thr1048 bears the Phosphothreonine mark. Tyr1121 is subject to Phosphotyrosine.

Belongs to the SLC12A transporter family. K/Cl co-transporter subfamily. Homodimer; adopts a domain-swap conformation at the scissor helices connecting the transmembrane domain and C-terminal domain. Heterodimer with K-Cl cotransporter SLC12A5. Interacts (via C-terminus) with CKB; the interaction may be required for potassium-chloride cotransport activity. In terms of processing, phosphorylated, phosphorylation regulates transporter activity. Phosphorylated at Thr-991 and Thr-1048 by OXSR1/OSR1 and STK39/SPAK downstream of WNK kinases (WNK1, WNK2, WNK3 or WNK4), inhibiting the potassium-chloride cotransport activity. Post-translationally, N-glycosylated. As to expression, expressed in hippocampus and corpus callosum (at protein level). Highly expressed throughout the brain and detected at lower levels in kidney. Highly expressed in highly myelinated white matter of the brain, but not in gray matter. Detected in the corpus callosum, in packed cell layers of the hippocampus and in Purkinje neurons within the cerebellum. Highly expressed in white matter in the spinal cord, but not in dorsal root ganglia or sciatic nerve. Colocalizes with the oligodendrocyte marker CNP. Expressed in hippocampus in CA1, and to a lesser extent CA3 pyramidal cells. Also expressed in cortex, mostly in large neurons and in the large cerebellar Purkinje cells. Highly expressed in kidney, but not detected in brain.

Its subcellular location is the cell membrane. The protein localises to the basolateral cell membrane. The enzyme catalyses K(+)(in) + chloride(in) = K(+)(out) + chloride(out). Its activity is regulated as follows. Inhibited following phosphorylation by OXSR1/OSR1 and STK39/SPAK: phosphorylation takes place downstream of WNK kinases (WNK1, WNK2, WNK3 or WNK4) in response to hyperosmotic stress and subsequent cell shrinkage. Mediates electroneutral potassium-chloride cotransport when activated by cell swelling. May contribute to cell volume homeostasis in single cells. Functionally, mediates electroneutral potassium-chloride cotransport when activated by cell swelling. May contribute to cell volume homeostasis in single cells. The protein is Solute carrier family 12 member 6 (Slc12a6) of Mus musculus (Mouse).